A 342-amino-acid chain; its full sequence is Ketol-acid reductoisomerase (NADP(+)) (342 aa).

The 181-residue stretch at A2–T182 folds into the KARI N-terminal Rossmann domain. Residues Y25–Q28, K48, S51, S53, and D83–Q86 contribute to the NADP(+) site. The active site involves H108. Residue G134 participates in NADP(+) binding. The KARI C-terminal knotted domain maps to T183–N328. Positions 191, 195, 227, and 231 each coordinate Mg(2+). Position 252 (S252) interacts with substrate.

This sequence belongs to the ketol-acid reductoisomerase family. Requires Mg(2+) as cofactor.

It catalyses the reaction (2R)-2,3-dihydroxy-3-methylbutanoate + NADP(+) = (2S)-2-acetolactate + NADPH + H(+). The catalysed reaction is (2R,3R)-2,3-dihydroxy-3-methylpentanoate + NADP(+) = (S)-2-ethyl-2-hydroxy-3-oxobutanoate + NADPH + H(+). It participates in amino-acid biosynthesis; L-isoleucine biosynthesis; L-isoleucine from 2-oxobutanoate: step 2/4. The protein operates within amino-acid biosynthesis; L-valine biosynthesis; L-valine from pyruvate: step 2/4. Functionally, involved in the biosynthesis of branched-chain amino acids (BCAA). Catalyzes an alkyl-migration followed by a ketol-acid reduction of (S)-2-acetolactate (S2AL) to yield (R)-2,3-dihydroxy-isovalerate. In the isomerase reaction, S2AL is rearranged via a Mg-dependent methyl migration to produce 3-hydroxy-3-methyl-2-ketobutyrate (HMKB). In the reductase reaction, this 2-ketoacid undergoes a metal-dependent reduction by NADPH to yield (R)-2,3-dihydroxy-isovalerate. The chain is Ketol-acid reductoisomerase (NADP(+)) from Leifsonia xyli subsp. xyli (strain CTCB07).